Here is a 429-residue protein sequence, read N- to C-terminus: Argininosuccinate lyase (429 aa).

It belongs to the lyase 1 family. Argininosuccinate lyase subfamily.

The protein localises to the cytoplasm. The enzyme catalyses 2-(N(omega)-L-arginino)succinate = fumarate + L-arginine. Its pathway is amino-acid biosynthesis; L-arginine biosynthesis; L-arginine from L-ornithine and carbamoyl phosphate: step 3/3. The chain is Argininosuccinate lyase from Pyrobaculum islandicum (strain DSM 4184 / JCM 9189 / GEO3).